A 320-amino-acid chain; its full sequence is Acetyl-coenzyme A carboxylase carboxyl transferase subunit alpha (320 aa).

The CoA carboxyltransferase C-terminal domain maps to 33-294; it reads AFDTEIQALR…GDAVEDELKA (262 aa).

This sequence belongs to the AccA family. As to quaternary structure, acetyl-CoA carboxylase is a heterohexamer composed of biotin carboxyl carrier protein (AccB), biotin carboxylase (AccC) and two subunits each of ACCase subunit alpha (AccA) and ACCase subunit beta (AccD).

The protein resides in the cytoplasm. It catalyses the reaction N(6)-carboxybiotinyl-L-lysyl-[protein] + acetyl-CoA = N(6)-biotinyl-L-lysyl-[protein] + malonyl-CoA. It functions in the pathway lipid metabolism; malonyl-CoA biosynthesis; malonyl-CoA from acetyl-CoA: step 1/1. In terms of biological role, component of the acetyl coenzyme A carboxylase (ACC) complex. First, biotin carboxylase catalyzes the carboxylation of biotin on its carrier protein (BCCP) and then the CO(2) group is transferred by the carboxyltransferase to acetyl-CoA to form malonyl-CoA. The chain is Acetyl-coenzyme A carboxylase carboxyl transferase subunit alpha from Caulobacter vibrioides (strain ATCC 19089 / CIP 103742 / CB 15) (Caulobacter crescentus).